We begin with the raw amino-acid sequence, 459 residues long: Argininosuccinate lyase (459 aa).

The disordered stretch occupies residues 440-459 (DEKKLEELRQNENRDNVYNP).

This sequence belongs to the lyase 1 family. Argininosuccinate lyase subfamily.

It is found in the cytoplasm. The catalysed reaction is 2-(N(omega)-L-arginino)succinate = fumarate + L-arginine. The protein operates within amino-acid biosynthesis; L-arginine biosynthesis; L-arginine from L-ornithine and carbamoyl phosphate: step 3/3. The sequence is that of Argininosuccinate lyase from Pyrococcus furiosus (strain ATCC 43587 / DSM 3638 / JCM 8422 / Vc1).